Consider the following 94-residue polypeptide: Large ribosomal subunit protein eL43A (94 aa).

Residues 39–62 (CPFCGRNTVKRTAAGIWCCNGKGC) form a C4-type zinc finger.

It belongs to the eukaryotic ribosomal protein eL43 family. Component of the large ribosomal subunit (LSU). Mature yeast ribosomes consist of a small (40S) and a large (60S) subunit. The 40S small subunit contains 1 molecule of ribosomal RNA (18S rRNA) and at least 33 different proteins. The large 60S subunit contains 3 rRNA molecules (25S, 5.8S and 5S rRNA) and at least 46 different proteins.

The protein resides in the cytoplasm. Its function is as follows. Component of the ribosome, a large ribonucleoprotein complex responsible for the synthesis of proteins in the cell. The small ribosomal subunit (SSU) binds messenger RNAs (mRNAs) and translates the encoded message by selecting cognate aminoacyl-transfer RNA (tRNA) molecules. The large subunit (LSU) contains the ribosomal catalytic site termed the peptidyl transferase center (PTC), which catalyzes the formation of peptide bonds, thereby polymerizing the amino acids delivered by tRNAs into a polypeptide chain. The nascent polypeptides leave the ribosome through a tunnel in the LSU and interact with protein factors that function in enzymatic processing, targeting, and the membrane insertion of nascent chains at the exit of the ribosomal tunnel. This Schizosaccharomyces pombe (strain 972 / ATCC 24843) (Fission yeast) protein is Large ribosomal subunit protein eL43A (rpl4301).